A 555-amino-acid polypeptide reads, in one-letter code: Membrane protein insertase YidC (555 aa).

The helical transmembrane segment at 7–24 (ILWVIFSMSLVLLYDNWQ) threads the bilayer. The disordered stretch occupies residues 61-81 (TAGAAAPAAPGGAPQAAAQPT). 5 consecutive transmembrane segments (helical) span residues 341 to 361 (GWLT…HGFL), 364 to 384 (WGWS…PLSA), 430 to 450 (LGGC…YWVL), 468 to 488 (LSVP…MFVQ), and 503 to 523 (VMMI…AGLV).

The protein belongs to the OXA1/ALB3/YidC family. Type 1 subfamily. In terms of assembly, interacts with the Sec translocase complex via SecD. Specifically interacts with transmembrane segments of nascent integral membrane proteins during membrane integration.

The protein resides in the cell inner membrane. Functionally, required for the insertion and/or proper folding and/or complex formation of integral membrane proteins into the membrane. Involved in integration of membrane proteins that insert both dependently and independently of the Sec translocase complex, as well as at least some lipoproteins. Aids folding of multispanning membrane proteins. In Cupriavidus pinatubonensis (strain JMP 134 / LMG 1197) (Cupriavidus necator (strain JMP 134)), this protein is Membrane protein insertase YidC.